The primary structure comprises 260 residues: UPF0246 protein APL_0602 (260 aa).

The protein belongs to the UPF0246 family.

The polypeptide is UPF0246 protein APL_0602 (Actinobacillus pleuropneumoniae serotype 5b (strain L20)).